The following is a 495-amino-acid chain: 1-aminocyclopropane-1-carboxylate synthase 6 (495 aa).

2 residues coordinate substrate: Glu-58 and Tyr-96. The residue at position 280 (Lys-280) is an N6-(pyridoxal phosphate)lysine. Phosphoserine occurs at positions 480, 483, and 488.

This sequence belongs to the class-I pyridoxal-phosphate-dependent aminotransferase family. As to quaternary structure, homodimer and heterodimer. In vivo, the relevance of heterodimerization with other ACS enzymes is however unsure. Interacts with GRF3. Pyridoxal 5'-phosphate serves as cofactor. Post-translationally, phosphorylated on serine residue by MAP kinase (MPK6). May be processed at its C-terminus. As to expression, expressed in roots and flowers.

The enzyme catalyses S-adenosyl-L-methionine = 1-aminocyclopropane-1-carboxylate + S-methyl-5'-thioadenosine + H(+). Its pathway is alkene biosynthesis; ethylene biosynthesis via S-adenosyl-L-methionine; ethylene from S-adenosyl-L-methionine: step 1/2. Functionally, 1-aminocyclopropane-1-carboxylate synthase (ACS) enzymes catalyze the conversion of S-adenosyl-L-methionine (SAM) into 1-aminocyclopropane-1-carboxylate (ACC), a direct precursor of ethylene. Involved in bacterial flagellin-induced ethylene production. In Arabidopsis thaliana (Mouse-ear cress), this protein is 1-aminocyclopropane-1-carboxylate synthase 6 (ACS6).